The primary structure comprises 549 residues: Small ribosomal subunit protein bS1 (549 aa).

S1 motif domains are found at residues 21 to 87 (GSIV…LSRE), 105 to 171 (KATV…VSRR), 192 to 260 (GSEV…LGLK), 277 to 347 (NSKL…LGLK), 364 to 434 (GDKV…LGIK), and 451 to 512 (GAVV…LSVK).

Belongs to the bacterial ribosomal protein bS1 family.

Its function is as follows. Binds mRNA; thus facilitating recognition of the initiation point. It is needed to translate mRNA with a short Shine-Dalgarno (SD) purine-rich sequence. The sequence is that of Small ribosomal subunit protein bS1 (rpsA) from Haemophilus influenzae (strain ATCC 51907 / DSM 11121 / KW20 / Rd).